The following is a 699-amino-acid chain: SPS-sensor serine protease component SSY5 (699 aa).

Disordered regions lie at residues 1-113 and 128-158; these read MVRF…LQGF and PVKE…ENAR. Positions 1 to 381 are excised as a propeptide; that stretch reads MVRFFGLNKK…YCVKDYIKKA (381 aa). Positions 24–38 are enriched in polar residues; that stretch reads NEQNAAETSSSNVSG. Residues 39 to 51 are compositionally biased toward basic and acidic residues; that stretch reads NEERIDPNSHDTN. Positions 61–78 are enriched in low complexity; the sequence is STTFGSSIQSSSIFSRGR. Polar residues predominate over residues 83 to 93; that stretch reads TGASSSMATSE. 2 stretches are compositionally biased toward low complexity: residues 97–109 and 144–154; these read HSSG…NSKN and SSSTSSTLATS. The tract at residues 459-699 is serine protease; sequence FAITCAHVVL…QWDIDPQLDG (241 aa). Active-site charge relay system residues include H465, D545, and S640.

Belongs to the peptidase S64 family. In terms of assembly, component of the plasma membrane SPS (SSY1-PTR3-SSY5) amino acid sensor complex. In terms of processing, the propeptide is autoproteolytically cleaved from the catalytic domain but remains associated, forming an inactive protease complex. This processing occurs even in the absence of signaling.

Its subcellular location is the cell membrane. Its function is as follows. Protease component of the SPS-sensor system, which regulates the expression of several amino acid-metabolizing enzymes and amino acid- and peptide-permeases in response to extracellular amino acid levels by controlling the activity of two transcription factors, STP1 and STP2. Catalyzes the activation of these transcription factors, which are synthesized as latent cytoplasmic precursors, by proteolytic removal of an N-terminal inhibitory domain containing cytoplasmic retention motifs. SSY5 binds as an inactive protease complex to STP1. In response to extracellular amino acids and dependent on the other SPS-sensor components, the inhibitory propeptide is induced to dissociate, and thereby enables the catalytic domain to process STP1. In Saccharomyces cerevisiae (strain ATCC 204508 / S288c) (Baker's yeast), this protein is SPS-sensor serine protease component SSY5 (SSY5).